Here is a 395-residue protein sequence, read N- to C-terminus: Multiple organellar RNA editing factor 8, chloroplastic/mitochondrial (395 aa).

Residues 1-56 (MATHTISRSILCRPAKSLSFLFTRSFASSAPLAKSPASSLLSRSRPLVAAFSSVFR) constitute a chloroplast and mitochondrion transit peptide. Positions 211–236 (ANERNRRNDRPRNNDRSRNFERRREN) are enriched in basic and acidic residues. Residues 211-395 (ANERNRRNDR…RDGSGNPYQG (185 aa)) form a disordered region. Pro residues predominate over residues 240–300 (GPPPQRPPMG…GPRHPPPYGA (61 aa)). Residues 313-334 (QNYGGTPPPNYGGAPPANNMGG) are compositionally biased toward low complexity. Over residues 335 to 355 (APPPNYGGGPPPQYGAVPPPQ) the composition is skewed to pro residues. The span at 356–385 (YGGAPPQNNNYQQQGSGMQQPQYQNNYPPN) shows a compositional bias: low complexity.

Belongs to the MORF family. Interacts with protoporphyrinogen oxidase 1 PPOX1. Interacts with PCMP-H52/MEF10. Homodimer and heterodimers with MORF1/RIP8, MORF2/RIP2, MORF3/RIP3, MORF4/RIP4, MORF5/RIP5, MORF6/RIP6 and MORF7/RIP7. Interacts with RBG3/ORRM3. Interacts with PCMP-A2/PMD1. Interacts with ORRM1 and VAT3/OZ1. Interacts with PCMP-H13/MEF35. Interacts with RBG5/ORRM4. Interacts with ORRM6.

The protein resides in the mitochondrion. Its subcellular location is the plastid. It localises to the chloroplast. Its function is as follows. Involved in organellar RNA editing. Required for the processing of numerous RNA editing sites in mitochondria and plastids. Binds to the plastid RARE1 factor, a pentatricopeptide repeat-containing protein involved in RNA editing. In Arabidopsis thaliana (Mouse-ear cress), this protein is Multiple organellar RNA editing factor 8, chloroplastic/mitochondrial.